The primary structure comprises 220 residues: 7-cyano-7-deazaguanine synthase (220 aa).

An ATP-binding site is contributed by 7-17 (LSGGMDSSITA). C185, C193, C196, and C199 together coordinate Zn(2+).

This sequence belongs to the QueC family. Requires Zn(2+) as cofactor.

It carries out the reaction 7-carboxy-7-deazaguanine + NH4(+) + ATP = 7-cyano-7-deazaguanine + ADP + phosphate + H2O + H(+). It functions in the pathway purine metabolism; 7-cyano-7-deazaguanine biosynthesis. Catalyzes the ATP-dependent conversion of 7-carboxy-7-deazaguanine (CDG) to 7-cyano-7-deazaguanine (preQ(0)). The chain is 7-cyano-7-deazaguanine synthase from Nitratiruptor sp. (strain SB155-2).